A 283-amino-acid chain; its full sequence is Serine/threonine-protein phosphatase Pgam5, mitochondrial (283 aa).

A helical transmembrane segment spans residues 7 to 23 (MYGLPSAAVAVGTALLN).

The protein belongs to the phosphoglycerate mutase family. BPG-dependent PGAM subfamily. As to quaternary structure, interacts with skn-1.

The protein resides in the mitochondrion outer membrane. It catalyses the reaction O-phospho-L-seryl-[protein] + H2O = L-seryl-[protein] + phosphate. The catalysed reaction is O-phospho-L-threonyl-[protein] + H2O = L-threonyl-[protein] + phosphate. Functionally, displays phosphatase activity for serine/threonine residues. Has apparently no phosphoglycerate mutase activity. The protein is Serine/threonine-protein phosphatase Pgam5, mitochondrial (pgam-5) of Caenorhabditis briggsae.